The primary structure comprises 123 residues: Small ribosomal subunit protein uS12 (123 aa).

Position 89 is a 3-methylthioaspartic acid (aspartate 89).

It belongs to the universal ribosomal protein uS12 family. In terms of assembly, part of the 30S ribosomal subunit. Contacts proteins S8 and S17. May interact with IF1 in the 30S initiation complex.

Functionally, with S4 and S5 plays an important role in translational accuracy. Interacts with and stabilizes bases of the 16S rRNA that are involved in tRNA selection in the A site and with the mRNA backbone. Located at the interface of the 30S and 50S subunits, it traverses the body of the 30S subunit contacting proteins on the other side and probably holding the rRNA structure together. The combined cluster of proteins S8, S12 and S17 appears to hold together the shoulder and platform of the 30S subunit. In Trichlorobacter lovleyi (strain ATCC BAA-1151 / DSM 17278 / SZ) (Geobacter lovleyi), this protein is Small ribosomal subunit protein uS12.